We begin with the raw amino-acid sequence, 588 residues long: Arylsulfatase L (588 aa).

Residues 1–31 (MLHLHHSWLCFRSWLAGMLSVLLGLVPSASS) form the signal peptide. An N-linked (GlcNAc...) asparagine glycan is attached at N32. The Ca(2+) site is built by D46 and D47. N-linked (GlcNAc...) asparagine glycosylation occurs at N58. C86 contacts Ca(2+). The Nucleophile role is filled by C86. The residue at position 86 (C86) is a 3-oxoalanine (Cys). N125 is a glycosylation site (N-linked (GlcNAc...) asparagine). K145 is a substrate binding site. H147 is an active-site residue. N-linked (GlcNAc...) asparagine glycosylation is present at N258. A substrate-binding site is contributed by H301. N344 is a glycosylation site (N-linked (GlcNAc...) asparagine). The Ca(2+) site is built by D353 and H354. Residue K378 participates in substrate binding.

Belongs to the sulfatase family. Ca(2+) is required as a cofactor. In terms of processing, the conversion to 3-oxoalanine (also known as C-formylglycine, FGly), of a serine or cysteine residue in prokaryotes and of a cysteine residue in eukaryotes, is critical for catalytic activity.

The protein resides in the golgi apparatus. Its subcellular location is the golgi stack. It catalyses the reaction an aryl sulfate + H2O = a phenol + sulfate + H(+). In terms of biological role, exhibits arylsulfatase activity towards the artificial substrate 4-methylumbelliferyl sulfate. May be essential for the correct composition of cartilage and bone matrix during development. Has no activity toward steroid sulfates. This Macaca fascicularis (Crab-eating macaque) protein is Arylsulfatase L (ARSL).